A 136-amino-acid chain; its full sequence is MAQVAIFKEIFDQVRKDLNCELFYSELKRHNVSHYIYYLATDNIHIVLENDNTVLIKGLKKVVNVKFSRNTHLIETSYDRLKSREITFQQYRENLAKAGVFRWITNIHEHKRYYYTFDNSLLFTESIQNTTQIFPR.

To E.coli YcgX and YdfO.

This is an uncharacterized protein from Escherichia coli (strain K12).